Here is a 555-residue protein sequence, read N- to C-terminus: Formate--tetrahydrofolate ligase (555 aa).

Residue 65-72 participates in ATP binding; the sequence is TPAGEGKS.

The protein belongs to the formate--tetrahydrofolate ligase family.

It carries out the reaction (6S)-5,6,7,8-tetrahydrofolate + formate + ATP = (6R)-10-formyltetrahydrofolate + ADP + phosphate. Its pathway is one-carbon metabolism; tetrahydrofolate interconversion. The protein is Formate--tetrahydrofolate ligase of Staphylococcus haemolyticus (strain JCSC1435).